The sequence spans 363 residues: Phosphoserine aminotransferase (363 aa).

Arg-42 is a binding site for L-glutamate. Pyridoxal 5'-phosphate is bound by residues 76 to 77, Trp-101, Thr-151, Asp-170, and Gln-193; that span reads AS. Residue Lys-194 is modified to N6-(pyridoxal phosphate)lysine. 234 to 235 serves as a coordination point for pyridoxal 5'-phosphate; the sequence is NT.

The protein belongs to the class-V pyridoxal-phosphate-dependent aminotransferase family. SerC subfamily. Homodimer. It depends on pyridoxal 5'-phosphate as a cofactor.

It localises to the cytoplasm. It catalyses the reaction O-phospho-L-serine + 2-oxoglutarate = 3-phosphooxypyruvate + L-glutamate. The catalysed reaction is 4-(phosphooxy)-L-threonine + 2-oxoglutarate = (R)-3-hydroxy-2-oxo-4-phosphooxybutanoate + L-glutamate. The protein operates within amino-acid biosynthesis; L-serine biosynthesis; L-serine from 3-phospho-D-glycerate: step 2/3. Its function is as follows. Catalyzes the reversible conversion of 3-phosphohydroxypyruvate to phosphoserine and of 3-hydroxy-2-oxo-4-phosphonooxybutanoate to phosphohydroxythreonine. This is Phosphoserine aminotransferase from Listeria innocua serovar 6a (strain ATCC BAA-680 / CLIP 11262).